The chain runs to 112 residues: DNA-binding protein TON_1102 (112 aa).

The protein belongs to the PDCD5 family.

This Thermococcus onnurineus (strain NA1) protein is DNA-binding protein TON_1102.